Consider the following 447-residue polypeptide: Chitobiosyldiphosphodolichol beta-mannosyltransferase (447 aa).

Topologically, residues 1–2 (MT) are cytoplasmic. The chain crosses the membrane as a helical; Signal-anchor for type II membrane protein span at residues 3-23 (LVLLLSIFAICFSSVAFIQLL). Residues 24–447 (PTRREKKSSE…IAGTFLGLVT (424 aa)) lie on the Lumenal side of the membrane.

Belongs to the glycosyltransferase group 1 family. Glycosyltransferase 33 subfamily.

It localises to the endoplasmic reticulum membrane. The enzyme catalyses an N,N'-diacetylchitobiosyl-diphospho-di-trans,poly-cis-dolichol + GDP-alpha-D-mannose = a beta-D-Man-(1-&gt;4)-beta-D-GlcNAc-(1-&gt;4)-alpha-D-GlcNAc-diphospho-di-trans,poly-cis-dolichol + GDP + H(+). It functions in the pathway protein modification; protein glycosylation. Participates in the formation of the lipid-linked precursor oligosaccharide for N-glycosylation. Involved in assembling the dolichol-pyrophosphate-GlcNAc(2)-Man(5) intermediate on the cytoplasmic surface of the ER. In Arthroderma benhamiae (strain ATCC MYA-4681 / CBS 112371) (Trichophyton mentagrophytes), this protein is Chitobiosyldiphosphodolichol beta-mannosyltransferase.